A 210-amino-acid chain; its full sequence is Cytochrome c biogenesis ATP-binding export protein CcmA (210 aa).

The ABC transporter domain occupies 3–209 (LTVTNLACAR…PADDPFAGVT (207 aa)). 35-42 (GPNGIGKT) is an ATP binding site.

This sequence belongs to the ABC transporter superfamily. CcmA exporter (TC 3.A.1.107) family. As to quaternary structure, the complex is composed of two ATP-binding proteins (CcmA) and two transmembrane proteins (CcmB).

The protein localises to the cell inner membrane. It catalyses the reaction heme b(in) + ATP + H2O = heme b(out) + ADP + phosphate + H(+). Part of the ABC transporter complex CcmAB involved in the biogenesis of c-type cytochromes; once thought to export heme, this seems not to be the case, but its exact role is uncertain. Responsible for energy coupling to the transport system. This is Cytochrome c biogenesis ATP-binding export protein CcmA from Cereibacter sphaeroides (strain ATCC 17023 / DSM 158 / JCM 6121 / CCUG 31486 / LMG 2827 / NBRC 12203 / NCIMB 8253 / ATH 2.4.1.) (Rhodobacter sphaeroides).